Reading from the N-terminus, the 445-residue chain is Chromosome partition protein MukF (445 aa).

Residues 213-241 (LSETSNTLKELQDTLQAAGDELQTQILDI) are leucine-zipper.

It belongs to the MukF family. As to quaternary structure, interacts, and probably forms a ternary complex, with MukE and MukB via its C-terminal region. The complex formation is stimulated by calcium or magnesium. It is required for an interaction between MukE and MukB.

The protein localises to the cytoplasm. The protein resides in the nucleoid. Involved in chromosome condensation, segregation and cell cycle progression. May participate in facilitating chromosome segregation by condensation DNA from both sides of a centrally located replisome during cell division. Not required for mini-F plasmid partitioning. Probably acts via its interaction with MukB and MukE. Overexpression results in anucleate cells. It has a calcium binding activity. The polypeptide is Chromosome partition protein MukF (Vibrio vulnificus (strain CMCP6)).